We begin with the raw amino-acid sequence, 429 residues long: Glutamate-1-semialdehyde 2,1-aminomutase (429 aa).

Lys-267 is modified (N6-(pyridoxal phosphate)lysine).

Belongs to the class-III pyridoxal-phosphate-dependent aminotransferase family. HemL subfamily. As to quaternary structure, homodimer. Pyridoxal 5'-phosphate serves as cofactor.

It is found in the cytoplasm. It catalyses the reaction (S)-4-amino-5-oxopentanoate = 5-aminolevulinate. It functions in the pathway porphyrin-containing compound metabolism; protoporphyrin-IX biosynthesis; 5-aminolevulinate from L-glutamyl-tRNA(Glu): step 2/2. This is Glutamate-1-semialdehyde 2,1-aminomutase from Xanthomonas euvesicatoria pv. vesicatoria (strain 85-10) (Xanthomonas campestris pv. vesicatoria).